A 274-amino-acid chain; its full sequence is Protein STAY-GREEN, chloroplastic (274 aa).

The N-terminal 48 residues, 1-48 (MAAATSTMSLIPPITQQQRWHAADSLVVLASRRHDSRRRRRCRYVVPR), are a transit peptide targeting the chloroplast.

Belongs to the staygreen family.

Its subcellular location is the plastid. The protein resides in the chloroplast. Involved in the disassembling mechanism of the intact light-harvesting complex of photosystem II (LHCPII) in the thylakoid membranes. Required to trigger chlorophyll degradation during natural and dark-induced leaf senescence. The sequence is that of Protein STAY-GREEN, chloroplastic (SGR) from Oryza sativa subsp. indica (Rice).